We begin with the raw amino-acid sequence, 381 residues long: Succinyl-diaminopimelate desuccinylase (381 aa).

Histidine 68 serves as a coordination point for Zn(2+). The active site involves aspartate 70. Aspartate 101 provides a ligand contact to Zn(2+). Residue glutamate 135 is the Proton acceptor of the active site. Zn(2+) is bound by residues glutamate 136, glutamate 164, and histidine 350.

This sequence belongs to the peptidase M20A family. DapE subfamily. As to quaternary structure, homodimer. Requires Zn(2+) as cofactor. It depends on Co(2+) as a cofactor.

It carries out the reaction N-succinyl-(2S,6S)-2,6-diaminopimelate + H2O = (2S,6S)-2,6-diaminopimelate + succinate. It participates in amino-acid biosynthesis; L-lysine biosynthesis via DAP pathway; LL-2,6-diaminopimelate from (S)-tetrahydrodipicolinate (succinylase route): step 3/3. Functionally, catalyzes the hydrolysis of N-succinyl-L,L-diaminopimelic acid (SDAP), forming succinate and LL-2,6-diaminopimelate (DAP), an intermediate involved in the bacterial biosynthesis of lysine and meso-diaminopimelic acid, an essential component of bacterial cell walls. In Neisseria gonorrhoeae (strain ATCC 700825 / FA 1090), this protein is Succinyl-diaminopimelate desuccinylase.